A 31-amino-acid polypeptide reads, in one-letter code: uncharacterized protein (31 aa).

The segment at 1 to 31 (MKKLERMSEVSQMCSEAKKNRKRMSVVSSVA) is disordered.

This is an uncharacterized protein from Sulfolobus islandicus filamentous virus (isolate Iceland/Hveragerdi) (SIFV).